The sequence spans 647 residues: MMGVGKNTSKSVEVGGSTEGKYEEEAKRPDFFTLPVVINGGATSSGEQDNEDTELMAIYTTENGIAEKSSLAETLDSTGSLDPQRSDMIYTIEDVPPWYLCIFLGLQHYLTCFSGTIAVPFLLADAMCVGDDQWATSQLIGTIFFCVGITTLLQTTFGCRLPLFQASAFAFLAPARAILSLDKWKCNTTEITVANGTAELLEHIWHPRIQEIQGAIIMSSLIEVVIGLLGLPGALLRYIGPLTITPTVALIGLSGFQAAGERAGKHWGIAMLTIFLVLLFSQYARNVKFPLPIYKSKKGWTAYKLQLFKMFPIILAILVSWLLCFIFTVTDVFPSNSTDYGYYARTDARKGVLLVAPWFKVPYPFQWGMPTVSAAGVIGMLSAVVASIIESIGDYYACARLSCAPPPPIHAINRGIFVEGLSCVLDGVFGTGNGSTSSSPNIGVLGITKVGSRRVIQYGAALMLGLGMIGKFSALFASLPDPVLGALFCTLFGMITAVGLSNLQFIDLNSSRNLFVLGFSIFFGLVLPSYLRQNPLVTGITGIDQVLNVLLTTAMFVGGCVAFILDNTIPGTPEERGIKKWKKGVSKGNKSLDGMESYNLPFGMNIIKKYRCFSYLPISPTFAGYTWKGFGKSENRRSSDKDSQATV.

The segment covering 1 to 11 (MMGVGKNTSKS) has biased composition (polar residues). The disordered stretch occupies residues 1–26 (MMGVGKNTSKSVEVGGSTEGKYEEEA). Residues 8-109 (TSKSVEVGGS…LCIFLGLQHY (102 aa)) lie on the Cytoplasmic side of the membrane. A Phosphoserine modification is found at Ser-69. At Thr-74 the chain carries Phosphothreonine. Ser-77 carries the phosphoserine modification. Thr-78 carries the post-translational modification Phosphothreonine. Position 80 is a phosphoserine (Ser-80). The chain crosses the membrane as a helical span at residues 110–130 (LTCFSGTIAVPFLLADAMCVG). Residues 131-138 (DDQWATSQ) lie on the Extracellular side of the membrane. A helical membrane pass occupies residues 139-159 (LIGTIFFCVGITTLLQTTFGC). A topological domain (cytoplasmic) is located at residue Arg-160. Residues 161–181 (LPLFQASAFAFLAPARAILSL) form a helical membrane-spanning segment. Residues 182-215 (DKWKCNTTEITVANGTAELLEHIWHPRIQEIQGA) are Extracellular-facing. N-linked (GlcNAc...) asparagine glycosylation is found at Asn-187 and Asn-195. The chain crosses the membrane as a helical span at residues 216–236 (IIMSSLIEVVIGLLGLPGALL). Over 237-263 (RYIGPLTITPTVALIGLSGFQAAGERA) the chain is Cytoplasmic. The chain crosses the membrane as a helical span at residues 264 to 281 (GKHWGIAMLTIFLVLLFS). Topologically, residues 282 to 285 (QYAR) are extracellular. Positions 286–299 (NVKFPLPIYKSKKG) form an intramembrane region, helical. The Extracellular portion of the chain corresponds to 300 to 306 (WTAYKLQ). Residues 307 to 327 (LFKMFPIILAILVSWLLCFIF) form a helical membrane-spanning segment. The Cytoplasmic segment spans residues 328-368 (TVTDVFPSNSTDYGYYARTDARKGVLLVAPWFKVPYPFQWG). Residues 369 to 389 (MPTVSAAGVIGMLSAVVASII) traverse the membrane as a helical segment. At 390-414 (ESIGDYYACARLSCAPPPPIHAINR) the chain is on the extracellular side. A helical membrane pass occupies residues 415–435 (GIFVEGLSCVLDGVFGTGNGS). Residues 436–458 (TSSSPNIGVLGITKVGSRRVIQY) lie on the Cytoplasmic side of the membrane. The helical transmembrane segment at 459-479 (GAALMLGLGMIGKFSALFASL) threads the bilayer. Topologically, residues 480-482 (PDP) are extracellular. The chain crosses the membrane as a helical span at residues 483–503 (VLGALFCTLFGMITAVGLSNL). At 504 to 513 (QFIDLNSSRN) the chain is on the cytoplasmic side. The helical transmembrane segment at 514–534 (LFVLGFSIFFGLVLPSYLRQN) threads the bilayer. Topologically, residues 535–544 (PLVTGITGID) are extracellular. The chain crosses the membrane as a helical span at residues 545-565 (QVLNVLLTTAMFVGGCVAFIL). The Cytoplasmic segment spans residues 566–647 (DNTIPGTPEE…SSDKDSQATV (82 aa)). Thr-646 bears the Phosphothreonine mark.

It belongs to the nucleobase:cation symporter-2 (NCS2) (TC 2.A.40) family. In terms of assembly, interacts with CLSTN3. In terms of processing, phosphorylated. Highly expressed in neural, neuroendocrine, exocrine and endothelial tissues and in osteoblasts. Detected in neurons throughout the central nervous system, in meninges and choroid plexus, in the anterior pituitary, the intermediate lobe, in pancreas, adrenal cortex, gastric glands, and in the inner nuclear layer of the retina.

It localises to the cell membrane. It catalyses the reaction L-ascorbate(out) + 2 Na(+)(out) = L-ascorbate(in) + 2 Na(+)(in). In terms of biological role, sodium/ascorbate cotransporter. Mediates electrogenic uptake of vitamin C, with a stoichiometry of 2 Na(+) for each ascorbate. This chain is Solute carrier family 23 member 2 (Slc23a2), found in Rattus norvegicus (Rat).